A 297-amino-acid chain; its full sequence is D-aminoacyl-tRNA deacylase (297 aa).

The protein belongs to the DtdA deacylase family. Monomer. Zn(2+) is required as a cofactor.

It carries out the reaction a D-aminoacyl-tRNA + H2O = a tRNA + a D-alpha-amino acid + H(+). The catalysed reaction is glycyl-tRNA(Ala) + H2O = tRNA(Ala) + glycine + H(+). D-aminoacyl-tRNA deacylase with broad substrate specificity. By recycling D-aminoacyl-tRNA to D-amino acids and free tRNA molecules, this enzyme counteracts the toxicity associated with the formation of D-aminoacyl-tRNA entities in vivo. In Methanosarcina acetivorans (strain ATCC 35395 / DSM 2834 / JCM 12185 / C2A), this protein is D-aminoacyl-tRNA deacylase.